The sequence spans 246 residues: Protein SRL3 (246 aa).

The segment covering serine 49–proline 61 has biased composition (polar residues). Disordered regions lie at residues serine 49–aspartate 68 and histidine 200–serine 229. Serine 212 carries the post-translational modification Phosphoserine.

Interacts with CLN2. Post-translationally, phosphorylated by CDC28, probably in association with G1 cyclin CLN2.

The protein resides in the cytoplasm. Its function is as follows. Weakly suppresses a RAD53 null mutation when overexpressed. The chain is Protein SRL3 (SRL3) from Saccharomyces cerevisiae (strain ATCC 204508 / S288c) (Baker's yeast).